The sequence spans 250 residues: Type III pantothenate kinase (250 aa).

6–13 (DVGNTNTV) is an ATP binding site. Residue 103 to 106 (GADR) participates in substrate binding. The active-site Proton acceptor is aspartate 105. Position 125 (aspartate 125) interacts with K(+). Threonine 128 provides a ligand contact to ATP. Threonine 180 is a substrate binding site.

This sequence belongs to the type III pantothenate kinase family. Homodimer. NH4(+) is required as a cofactor. K(+) serves as cofactor.

It localises to the cytoplasm. It catalyses the reaction (R)-pantothenate + ATP = (R)-4'-phosphopantothenate + ADP + H(+). It participates in cofactor biosynthesis; coenzyme A biosynthesis; CoA from (R)-pantothenate: step 1/5. Its function is as follows. Catalyzes the phosphorylation of pantothenate (Pan), the first step in CoA biosynthesis. This is Type III pantothenate kinase from Frankia casuarinae (strain DSM 45818 / CECT 9043 / HFP020203 / CcI3).